Consider the following 493-residue polypeptide: Glycerol kinase (493 aa).

Position 12 (Thr-12) interacts with ADP. The ATP site is built by Thr-12, Thr-13, and Ser-14. Thr-12 is a sn-glycerol 3-phosphate binding site. Arg-16 provides a ligand contact to ADP. Sn-glycerol 3-phosphate-binding residues include Arg-82, Glu-83, Tyr-132, and Asp-239. Residues Arg-82, Glu-83, Tyr-132, Asp-239, and Gln-240 each coordinate glycerol. ADP contacts are provided by Thr-261 and Gly-303. ATP-binding residues include Thr-261, Gly-303, Gln-307, and Gly-402. Residues Gly-402 and Asn-406 each coordinate ADP.

The protein belongs to the FGGY kinase family.

The catalysed reaction is glycerol + ATP = sn-glycerol 3-phosphate + ADP + H(+). It functions in the pathway polyol metabolism; glycerol degradation via glycerol kinase pathway; sn-glycerol 3-phosphate from glycerol: step 1/1. Key enzyme in the regulation of glycerol uptake and metabolism. Catalyzes the phosphorylation of glycerol to yield sn-glycerol 3-phosphate. The polypeptide is Glycerol kinase (Thermococcus onnurineus (strain NA1)).